A 681-amino-acid chain; its full sequence is uncharacterized protein (681 aa).

This sequence belongs to the protein kinase superfamily. ADCK protein kinase family.

This is an uncharacterized protein from Synechocystis sp. (strain ATCC 27184 / PCC 6803 / Kazusa).